The sequence spans 188 residues: GPI-anchored hemophore ARB_01017 (188 aa).

The signal sequence occupies residues 1–17 (MKLSVVALAALVSVAAA). The CFEM domain maps to 18–107 (QGVSELPKCA…SSSSGSASST (90 aa)). Intrachain disulfides connect Cys26–Cys64, Cys30–Cys59, Cys39–Cys45, and Cys47–Cys80. Asp42 is a heme binding site. The tract at residues 95-163 (TGGSSSSGSA…ATSTGAPTQT (69 aa)) is disordered. Asn165 is lipidated: GPI-anchor amidated asparagine. The propeptide at 166–188 (AAASVNANGGLLAAIAALVIAVA) is removed in mature form.

This sequence belongs to the RBT5 family. Post-translationally, the GPI-anchor is attached to the protein in the endoplasmic reticulum and serves to target the protein to the cell surface. There, the glucosamine-inositol phospholipid moiety is cleaved off and the GPI-modified mannoprotein is covalently attached via its lipidless GPI glycan remnant to the 1,6-beta-glucan of the outer cell wall layer.

The protein resides in the secreted. The protein localises to the cell wall. It is found in the cell membrane. GPI-anchored cell wall protein involved in stabilizing the cell wall. The protein is GPI-anchored hemophore ARB_01017 of Arthroderma benhamiae (strain ATCC MYA-4681 / CBS 112371) (Trichophyton mentagrophytes).